An 88-amino-acid polypeptide reads, in one-letter code: Small ribosomal subunit protein uS17 (88 aa).

This sequence belongs to the universal ribosomal protein uS17 family. In terms of assembly, part of the 30S ribosomal subunit.

One of the primary rRNA binding proteins, it binds specifically to the 5'-end of 16S ribosomal RNA. The polypeptide is Small ribosomal subunit protein uS17 (Stutzerimonas stutzeri (strain A1501) (Pseudomonas stutzeri)).